Consider the following 201-residue polypeptide: Ubiquitin-conjugating enzyme E2 E2 (201 aa).

Positions 1 to 10 (MSTEAQRVDD) are enriched in basic and acidic residues. A disordered region spans residues 1 to 55 (MSTEAQRVDDSPSTSGGSSDGDQRESVQQEPDREQVQPKKKEGKISSKTAAKLST). Serine 2 carries the N-acetylserine modification. A phosphoserine mark is found at serine 11, serine 15, serine 18, and serine 19. A compositionally biased stretch (basic and acidic residues) spans 21-45 (GDQRESVQQEPDREQVQPKKKEGKI). The span at 46-55 (SSKTAAKLST) shows a compositional bias: low complexity. Positions 55-201 (TSAKRIQKEL…ARQWTKRYAT (147 aa)) constitute a UBC core domain. The active-site Glycyl thioester intermediate is the cysteine 139.

The protein belongs to the ubiquitin-conjugating enzyme family. In terms of processing, autoubiquitinated.

It carries out the reaction S-ubiquitinyl-[E1 ubiquitin-activating enzyme]-L-cysteine + [E2 ubiquitin-conjugating enzyme]-L-cysteine = [E1 ubiquitin-activating enzyme]-L-cysteine + S-ubiquitinyl-[E2 ubiquitin-conjugating enzyme]-L-cysteine.. It functions in the pathway protein modification; protein ubiquitination. Functionally, accepts ubiquitin from the E1 complex and catalyzes its covalent attachment to other proteins. In vitro catalyzes 'Lys-11'- and 'Lys-48'-, as well as 'Lys-63'-linked polyubiquitination. Catalyzes the ISGylation of influenza A virus NS1 protein. This chain is Ubiquitin-conjugating enzyme E2 E2 (Ube2e2), found in Mus musculus (Mouse).